We begin with the raw amino-acid sequence, 1295 residues long: Unconventional myosin-VI (1295 aa).

The Myosin N-terminal SH3-like domain maps to 2–53; it reads EDGRPVWAPHPTEGFQMGNIVDIGPDSLTIEPLGQKGKTFLALINQVFPAEE. The Myosin motor domain maps to 57 to 771; sequence KDVEDNCSLM…KFAEFDQIMK (715 aa). 151–158 provides a ligand contact to ATP; that stretch reads GESGAGKT. A Phosphoserine modification is found at Ser-267. Positions 273 to 317 are responsible for slow ATPase activity; sequence YLNRGCTRYFANKETDKQILQNRKTPEHLKAGSLKDPLLDDHGDF. Thr-405 is subject to Phosphothreonine. Ser-604 is subject to Phosphoserine. The actin-binding stretch occupies residues 651-673; it reads LNLLLDKLRSTGASFIRCIKPNL. Positions 782 to 810 are required for binding calmodulin; it reads KRVNHWLICSRWKKVQWCSLSVIKLKNKI. One can recognise an IQ domain in the interval 813–842; that stretch reads RAEACIKMQKTIRMWLCKRRHKPRIDGLVK. Positions 835 to 916 are three-helix bundle; the sequence is PRIDGLVKVG…EVLLSALQKK (82 aa). Residues 917–984 form an SAH region; sequence KQQEEEAERL…EDDEKRIQAE (68 aa). Residues 934–955 form a disordered region; it reads EKERKRREEDEQRRRKEEEERR. Positions 1061–1286 are interaction with TAX1BP1 and CALCOCO2/NDP52; the sequence is KEMSEILSRG…ESRQARPTYA (226 aa). Residues 1117–1119 are interaction with OPTN; it reads RRL. Residue Ser-1156 is modified to Phosphoserine. The tract at residues 1158–1286 is interaction with TOM1; that stretch reads QQNPAAQLPA…ESRQARPTYA (129 aa).

Belongs to the TRAFAC class myosin-kinesin ATPase superfamily. Myosin family. As to quaternary structure, homodimer; dimerization seems to implicate the unfolding of the three-helix bundle region creating an additional calmodulin binding site, and cargo binding. Able to function as a monomer under specific conditions in vitro. Forms a complex with CFTR and DAB2 in the apical membrane of epithelial cells. Component of the DISP/DOCK7-induced septin displacement complex, at least composed of DOCK7, LRCH3 and MYO6. Binding to calmodulin through a unique insert, not found in other myosins, located in the neck region between the motor domain and the IQ domain appears to contribute to the directionality reversal. This interaction occurs only if the C-terminal lobe of calmodulin is occupied by calcium. Interaction with F-actin/ACTN1 occurs only at the apical brush border domain of the proximal tubule cells. Interacts with DAB2. In vitro, the C-terminal globular tail binds a C-terminal region of DAB2. Interacts with CFTR. Interacts with CABP5. Interacts (via residues 1158-1286) with TOM1 (via residues 392-463). Interacts (via residues 1060-1285) with OPTN. Interacts (via residues 1060-1285) with TAX1BP1 and CALCOCO2/NDP52. Interacts with TOM1L2. Interacts with CLIC5; may work together in a complex which also includes RDX and MYO6 to stabilize linkages between the plasma membrane and subjacent actin cytoskeleton at the base of stereocilia. In terms of processing, phosphorylation in the motor domain, induced by EGF, results in translocation of MYO6 from the cell surface to membrane ruffles and affects F-actin dynamics. Phosphorylated in vitro by p21-activated kinase (PAK). Expressed in the retina (at protein level).

It localises to the golgi apparatus. It is found in the trans-Golgi network membrane. The protein localises to the nucleus. The protein resides in the cytoplasm. Its subcellular location is the perinuclear region. It localises to the membrane. It is found in the clathrin-coated pit. The protein localises to the cytoplasmic vesicle. The protein resides in the clathrin-coated vesicle. Its subcellular location is the cell projection. It localises to the filopodium. It is found in the ruffle membrane. The protein localises to the microvillus. The protein resides in the cytosol. In terms of biological role, myosins are actin-based motor molecules with ATPase activity. Unconventional myosins serve in intracellular movements. Myosin 6 is a reverse-direction motor protein that moves towards the minus-end of actin filaments. Has slow rate of actin-activated ADP release due to weak ATP binding. Functions in a variety of intracellular processes such as vesicular membrane trafficking and cell migration. Required for the structural integrity of the Golgi apparatus via the p53-dependent pro-survival pathway. Appears to be involved in a very early step of clathrin-mediated endocytosis in polarized epithelial cells. Together with TOM1, mediates delivery of endocytic cargo to autophagosomes thereby promoting autophagosome maturation and driving fusion with lysosomes. Links TOM1 with autophagy receptors, such as TAX1BP1; CALCOCO2/NDP52 and OPTN. May act as a regulator of F-actin dynamics. As part of the DISP complex, may regulate the association of septins with actin and thereby regulate the actin cytoskeleton. May play a role in transporting DAB2 from the plasma membrane to specific cellular targets. May play a role in the extension and network organization of neurites. Required for structural integrity of inner ear hair cells. Required for the correct localization of CLIC5 and RDX at the stereocilium base. Modulates RNA polymerase II-dependent transcription. The polypeptide is Unconventional myosin-VI (Bos taurus (Bovine)).